Consider the following 491-residue polypeptide: Protein nucleotidyltransferase YdiU (491 aa).

8 residues coordinate ATP: Gly94, Gly96, Arg97, Lys117, Asp129, Gly130, Arg180, and Arg187. Asp256 functions as the Proton acceptor in the catalytic mechanism. Mg(2+)-binding residues include Asn257 and Asp266. Asp266 contributes to the ATP binding site.

The protein belongs to the SELO family. It depends on Mg(2+) as a cofactor. Mn(2+) is required as a cofactor.

It catalyses the reaction L-seryl-[protein] + ATP = 3-O-(5'-adenylyl)-L-seryl-[protein] + diphosphate. The enzyme catalyses L-threonyl-[protein] + ATP = 3-O-(5'-adenylyl)-L-threonyl-[protein] + diphosphate. The catalysed reaction is L-tyrosyl-[protein] + ATP = O-(5'-adenylyl)-L-tyrosyl-[protein] + diphosphate. It carries out the reaction L-histidyl-[protein] + UTP = N(tele)-(5'-uridylyl)-L-histidyl-[protein] + diphosphate. It catalyses the reaction L-seryl-[protein] + UTP = O-(5'-uridylyl)-L-seryl-[protein] + diphosphate. The enzyme catalyses L-tyrosyl-[protein] + UTP = O-(5'-uridylyl)-L-tyrosyl-[protein] + diphosphate. Functionally, nucleotidyltransferase involved in the post-translational modification of proteins. It can catalyze the addition of adenosine monophosphate (AMP) or uridine monophosphate (UMP) to a protein, resulting in modifications known as AMPylation and UMPylation. The polypeptide is Protein nucleotidyltransferase YdiU (Clostridium botulinum (strain Eklund 17B / Type B)).